The chain runs to 377 residues: Probable glucokinase 2 (377 aa).

27–32 contributes to the ATP binding site; that stretch reads CDVGGS.

The protein belongs to the bacterial glucokinase family.

The catalysed reaction is D-glucose + ATP = D-glucose 6-phosphate + ADP + H(+). This Trichomonas vaginalis protein is Probable glucokinase 2 (GK2).